A 272-amino-acid chain; its full sequence is Shikimate dehydrogenase (NADP(+)) (272 aa).

Shikimate contacts are provided by residues 14 to 16 (SKS) and Thr61. Lys65 acts as the Proton acceptor in catalysis. Glu77 provides a ligand contact to NADP(+). Shikimate-binding residues include Asn86 and Asp102. NADP(+) contacts are provided by residues 126–130 (GAGGA), 149–154 (NRTVSR), and Met213. Tyr215 lines the shikimate pocket. Residue Gly237 coordinates NADP(+).

It belongs to the shikimate dehydrogenase family. As to quaternary structure, homodimer.

The enzyme catalyses shikimate + NADP(+) = 3-dehydroshikimate + NADPH + H(+). Its pathway is metabolic intermediate biosynthesis; chorismate biosynthesis; chorismate from D-erythrose 4-phosphate and phosphoenolpyruvate: step 4/7. Involved in the biosynthesis of the chorismate, which leads to the biosynthesis of aromatic amino acids. Catalyzes the reversible NADPH linked reduction of 3-dehydroshikimate (DHSA) to yield shikimate (SA). The polypeptide is Shikimate dehydrogenase (NADP(+)) (Escherichia coli O81 (strain ED1a)).